The primary structure comprises 194 residues: Fe/S biogenesis protein NfuA (194 aa).

Residues Cys-152 and Cys-155 each coordinate [4Fe-4S] cluster.

Belongs to the NfuA family. As to quaternary structure, homodimer. It depends on [4Fe-4S] cluster as a cofactor.

Functionally, involved in iron-sulfur cluster biogenesis. Binds a 4Fe-4S cluster, can transfer this cluster to apoproteins, and thereby intervenes in the maturation of Fe/S proteins. Could also act as a scaffold/chaperone for damaged Fe/S proteins. This chain is Fe/S biogenesis protein NfuA, found in Pseudomonas aeruginosa (strain LESB58).